A 161-amino-acid chain; its full sequence is Ribonuclease P protein component (161 aa).

This sequence belongs to the RnpA family. Consists of a catalytic RNA component (M1 or rnpB) and a protein subunit.

It catalyses the reaction Endonucleolytic cleavage of RNA, removing 5'-extranucleotides from tRNA precursor.. Functionally, RNaseP catalyzes the removal of the 5'-leader sequence from pre-tRNA to produce the mature 5'-terminus. It can also cleave other RNA substrates such as 4.5S RNA. The protein component plays an auxiliary but essential role in vivo by binding to the 5'-leader sequence and broadening the substrate specificity of the ribozyme. In Helicobacter pylori (strain J99 / ATCC 700824) (Campylobacter pylori J99), this protein is Ribonuclease P protein component.